Consider the following 366-residue polypeptide: Class I histocompatibility antigen, Gogo-C*0201 alpha chain (366 aa).

The signal sequence occupies residues 1-24; sequence MRVMAPRTLILPLSGALALTETWA. The interval 25–114 is alpha-1; the sequence is GSHSMRYFYT…LRGYYNQSED (90 aa). Residues 25 to 308 are Extracellular-facing; the sequence is GSHSMRYFYT…EPSSQPTIPI (284 aa). A glycan (N-linked (GlcNAc...) asparagine) is linked at Asn-110. The interval 115 to 206 is alpha-2; that stretch reads GSHTLQSMYG…ENGKETLQRA (92 aa). Cystine bridges form between Cys-125–Cys-188 and Cys-227–Cys-283. The tract at residues 207-298 is alpha-3; the sequence is EPPKTHVTHH…GLPEPLTLRW (92 aa). The Ig-like C1-type domain maps to 209-297; sequence PKTHVTHHPL…EGLPEPLTLR (89 aa). Positions 299 to 308 are connecting peptide; the sequence is EPSSQPTIPI. Residues 309-333 form a helical membrane-spanning segment; the sequence is VGIVVGLAVLVVLAVLGAVVTAMMC. The Cytoplasmic segment spans residues 334–366; it reads RRKSSGGKGGSCSQAACSNSAQGSDESLITCKA.

Belongs to the MHC class I family. As to quaternary structure, heterodimer of an alpha chain and a beta chain (beta-2-microglobulin).

Its subcellular location is the membrane. In terms of biological role, involved in the presentation of foreign antigens to the immune system. This chain is Class I histocompatibility antigen, Gogo-C*0201 alpha chain, found in Gorilla gorilla gorilla (Western lowland gorilla).